A 92-amino-acid chain; its full sequence is Cell division protein FtsB (92 aa).

Residues 1–3 (MRL) lie on the Cytoplasmic side of the membrane. Residues 4 to 21 (LILILLSVLVLFQHDFWF) form a helical membrane-spanning segment. Topologically, residues 22-92 (GSNGFLDYRQ…VFYHIVKESK (71 aa)) are periplasmic. Positions 28–63 (DYRQNAEKIKENQAENEKLSQRNQRINAEIQGLTKG) form a coiled coil.

It belongs to the FtsB family. As to quaternary structure, part of a complex composed of FtsB, FtsL and FtsQ.

It localises to the cell inner membrane. In terms of biological role, essential cell division protein. May link together the upstream cell division proteins, which are predominantly cytoplasmic, with the downstream cell division proteins, which are predominantly periplasmic. The chain is Cell division protein FtsB from Haemophilus influenzae (strain PittEE).